Here is a 957-residue protein sequence, read N- to C-terminus: Atromentin synthetase (957 aa).

Residues 59–464 (SVQARTFQDF…SGRIKDTVIV (406 aa)) form an adenylation (A) domain region. The region spanning 596-674 (TPSTDDEKAL…DLAKYVNGLV (79 aa)) is the Carrier domain. A thiolation and peptide carrier (T) domain region spans residues 601–671 (DEKALAAIYA…IVSDLAKYVN (71 aa)). Position 633 is an O-(pantetheine 4'-phosphoryl)serine (serine 633). The interval 697–947 (PIFFVHPGVG…FDHVPQFQKI (251 aa)) is thioesterase (TE) domain.

It belongs to the ATP-dependent AMP-binding enzyme family.

It functions in the pathway secondary metabolite biosynthesis. Its function is as follows. The L-tyrosine:2-oxoglutarate aminotransferase atrD and the atromentin synthetase atrA catalyze consecutive steps to turn over L-tyrosine into atromentin, which represents the generic precursor molecule for the entire terphenylquinone and pulvinic acid family of pigments, which are widely distributed secondary metabolites in homobasidiomycetes. The first step is catalyzed by atrD which converts L-tyrosine in to 4-hydroxyphenylpyruvate (4-HPP). Adenylation of two 4-HPP monomers by the atrA adenylation (A) domain, ester bond formation between monomers and atrA, and symmetric C-C-bond formation between two monomers by atrA leads to atromentin. In Tapinella panuoides (Oyster rollrim mushroom), this protein is Atromentin synthetase.